Here is a 390-residue protein sequence, read N- to C-terminus: Alkanesulfonate monooxygenase (390 aa).

Belongs to the SsuD family.

It carries out the reaction an alkanesulfonate + FMNH2 + O2 = an aldehyde + FMN + sulfite + H2O + 2 H(+). Its function is as follows. Catalyzes the desulfonation of aliphatic sulfonates. This is Alkanesulfonate monooxygenase from Cupriavidus taiwanensis (strain DSM 17343 / BCRC 17206 / CCUG 44338 / CIP 107171 / LMG 19424 / R1) (Ralstonia taiwanensis (strain LMG 19424)).